A 145-amino-acid chain; its full sequence is D-aminoacyl-tRNA deacylase (145 aa).

Residues 137–138 carry the Gly-cisPro motif, important for rejection of L-amino acids motif; it reads GP.

This sequence belongs to the DTD family. Homodimer.

It is found in the cytoplasm. The enzyme catalyses glycyl-tRNA(Ala) + H2O = tRNA(Ala) + glycine + H(+). It catalyses the reaction a D-aminoacyl-tRNA + H2O = a tRNA + a D-alpha-amino acid + H(+). Its function is as follows. An aminoacyl-tRNA editing enzyme that deacylates mischarged D-aminoacyl-tRNAs. Also deacylates mischarged glycyl-tRNA(Ala), protecting cells against glycine mischarging by AlaRS. Acts via tRNA-based rather than protein-based catalysis; rejects L-amino acids rather than detecting D-amino acids in the active site. By recycling D-aminoacyl-tRNA to D-amino acids and free tRNA molecules, this enzyme counteracts the toxicity associated with the formation of D-aminoacyl-tRNA entities in vivo and helps enforce protein L-homochirality. The chain is D-aminoacyl-tRNA deacylase from Klebsiella pneumoniae (strain 342).